The chain runs to 439 residues: GTPase Der (439 aa).

EngA-type G domains lie at 3–167 (PLVA…PKSS) and 176–351 (TRIA…AQYS). GTP-binding positions include 9 to 16 (GRPNVGKS), 56 to 60 (DTGGF), 119 to 122 (NKVD), 182 to 189 (GRPNVGKS), 229 to 233 (DTAGI), and 294 to 297 (NKWD). Positions 352–436 (KRVSTSDLNR…PLKIIFRGRD (85 aa)) constitute a KH-like domain.

The protein belongs to the TRAFAC class TrmE-Era-EngA-EngB-Septin-like GTPase superfamily. EngA (Der) GTPase family. As to quaternary structure, associates with the 50S ribosomal subunit.

Functionally, GTPase that plays an essential role in the late steps of ribosome biogenesis. This is GTPase Der from Geobacter metallireducens (strain ATCC 53774 / DSM 7210 / GS-15).